The primary structure comprises 317 residues: Ribosomal large subunit pseudouridine synthase D (317 aa).

One can recognise an S4 RNA-binding domain in the interval 15-89; sequence WRLDRALASL…IPLEIVFEDE (75 aa). Asp141 is a catalytic residue.

This sequence belongs to the pseudouridine synthase RluA family.

The protein localises to the cytoplasm. It catalyses the reaction uridine(1911/1915/1917) in 23S rRNA = pseudouridine(1911/1915/1917) in 23S rRNA. Its function is as follows. Responsible for synthesis of pseudouridine from uracil at positions 1911, 1915 and 1917 in 23S ribosomal RNA. This is Ribosomal large subunit pseudouridine synthase D from Zymomonas mobilis subsp. mobilis (strain ATCC 31821 / ZM4 / CP4).